The sequence spans 290 residues: Nucleotide-binding protein LAR_0375 (290 aa).

13–20 (GMSGAGKT) is an ATP binding site. 63 to 66 (DMRS) serves as a coordination point for GTP.

This sequence belongs to the RapZ-like family.

Functionally, displays ATPase and GTPase activities. The chain is Nucleotide-binding protein LAR_0375 from Limosilactobacillus reuteri subsp. reuteri (strain JCM 1112) (Lactobacillus reuteri).